We begin with the raw amino-acid sequence, 259 residues long: L-erythrulose-1-phosphate isomerase (259 aa).

Catalysis depends on His-102, which acts as the Electrophile. The active-site Proton acceptor is Glu-174.

The protein belongs to the triosephosphate isomerase family.

It catalyses the reaction L-erythrulose 1-phosphate = D-erythrulose 4-phosphate. The protein operates within carbohydrate metabolism. Functionally, involved in catabolism of D-apiose. Catalyzes the isomerization of L-erythrulose 1-phosphate to D-erythrulose 4-phosphate. This chain is L-erythrulose-1-phosphate isomerase, found in Pectobacterium atrosepticum (strain SCRI 1043 / ATCC BAA-672) (Erwinia carotovora subsp. atroseptica).